Here is a 347-residue protein sequence, read N- to C-terminus: GMP reductase (347 aa).

Position 108-131 (108-131) interacts with NADP(+); that stretch reads ADFEKTKQILDLNPALNFVCIDVA. K(+)-binding residues include Gly-181 and Gly-183. Catalysis depends on Cys-186, which acts as the Thioimidate intermediate. NADP(+) is bound at residue 216–239; the sequence is IVSDGGCTTPGDVAKAFGGGADFV.

It belongs to the IMPDH/GMPR family. GuaC type 1 subfamily. As to quaternary structure, homotetramer.

The enzyme catalyses IMP + NH4(+) + NADP(+) = GMP + NADPH + 2 H(+). Functionally, catalyzes the irreversible NADPH-dependent deamination of GMP to IMP. It functions in the conversion of nucleobase, nucleoside and nucleotide derivatives of G to A nucleotides, and in maintaining the intracellular balance of A and G nucleotides. The polypeptide is GMP reductase (Escherichia coli O139:H28 (strain E24377A / ETEC)).